The primary structure comprises 669 residues: DNA ligase (669 aa).

NAD(+) is bound by residues 33–37 (DVTYD), 82–83 (SL), and E115. K117 functions as the N6-AMP-lysine intermediate in the catalytic mechanism. NAD(+) contacts are provided by R138, E172, K286, and K310. The Zn(2+) site is built by C401, C404, C417, and C422. A BRCT domain is found at 589–669 (VDSSFLFGKK…DIKNLVNLDD (81 aa)).

This sequence belongs to the NAD-dependent DNA ligase family. LigA subfamily. The cofactor is Mg(2+). It depends on Mn(2+) as a cofactor.

It catalyses the reaction NAD(+) + (deoxyribonucleotide)n-3'-hydroxyl + 5'-phospho-(deoxyribonucleotide)m = (deoxyribonucleotide)n+m + AMP + beta-nicotinamide D-nucleotide.. Its function is as follows. DNA ligase that catalyzes the formation of phosphodiester linkages between 5'-phosphoryl and 3'-hydroxyl groups in double-stranded DNA using NAD as a coenzyme and as the energy source for the reaction. It is essential for DNA replication and repair of damaged DNA. The protein is DNA ligase of Borrelia duttonii (strain Ly).